We begin with the raw amino-acid sequence, 729 residues long: Solute carrier family 15 member 2 (729 aa).

A disordered region spans residues 1–35 (MNPFQKNESKETLFSPVSTEEMLPRPPSPPKKSPP). Topologically, residues 1-57 (MNPFQKNESKETLFSPVSTEEMLPRPPSPPKKSPPKIFGSSYPVSIAFIVVNEFCER) are cytoplasmic. Serine 9 is modified (phosphoserine). Threonine 12 bears the Phosphothreonine mark. Residue serine 28 is modified to Phosphoserine. A helical transmembrane segment spans residues 58 to 78 (FSYYGMKAVLTLYFLYFLHWN). Over 79 to 87 (EDTSTSVYH) the chain is Extracellular. The chain crosses the membrane as a helical span at residues 88 to 108 (AFSSLCYFTPILGAAIADSWL). Residues 109–113 (GKFKT) are Cytoplasmic-facing. The chain crosses the membrane as a helical span at residues 114-134 (IIYLSLVYVLGHVFKSLGAIP). Residues 135–139 (ILGGK) lie on the Extracellular side of the membrane. A helical membrane pass occupies residues 140–160 (MLHTILSLVGLSLIALGTGGI). The Cytoplasmic segment spans residues 161-183 (KPCVAAFGGDQFEEEHAEARTRY). The chain crosses the membrane as a helical span at residues 184–204 (FSVFYLAINAGSLISTFITPM). At 205-217 (LRGDVKCFGQDCY) the chain is on the extracellular side. A helical transmembrane segment spans residues 218–238 (ALAFGVPGLLMVLALVVFAMG). The Cytoplasmic segment spans residues 239–295 (SKMYRKPPPEGNIVAQVIKCIWFALCNRFRNRSGDLPKRQHWLDWAAEKYPKHLIAD). Residues 296-316 (VKALTRVLFLYIPLPMFWALL) traverse the membrane as a helical segment. Over 317-343 (DQQGSRWTLQANKMNGDLGFFVLQPDQ) the chain is Extracellular. The chain crosses the membrane as a helical span at residues 344–364 (MQVLNPFLVLIFIPLFDLVIY). Over 365–380 (RLISKCRINFSSLRKM) the chain is Cytoplasmic. A helical membrane pass occupies residues 381–401 (AVGMILACLAFAVAALVETKI). Topologically, residues 402–611 (NGMIHPQPAS…PVNKLSIAWQ (210 aa)) are extracellular. The extracellular domain (ECD) stretch occupies residues 402-611 (NGMIHPQPAS…PVNKLSIAWQ (210 aa)). N-linked (GlcNAc...) asparagine glycans are attached at residues asparagine 435, asparagine 448, asparagine 528, and asparagine 587. A helical membrane pass occupies residues 612–632 (LPQYVLVTAAEVMFSVTGLEF). Over 633-643 (SYSQAPSSMKS) the chain is Cytoplasmic. The helical transmembrane segment at 644–664 (VLQAAWLLTVAVGNIIVLVVA) threads the bilayer. Residues 665–674 (QFSGLAQWAE) are Extracellular-facing. Residues 675 to 695 (FVLFSCLLLVVCLIFSVMAYY) form a helical membrane-spanning segment. Over 696 to 729 (YVPLKSEDTREATDKQIPAVQGNMINLETKNTRL) the chain is Cytoplasmic.

Belongs to the major facilitator superfamily. Proton-dependent oligopeptide transporter (POT/PTR) (TC 2.A.17) family. In terms of assembly, interacts (via extracellular domain region) with trypsin. Strongly expressed in kidney cortex and medulla. Also detected in brain, lung and spleen. Expressed in choroid plexus.

The protein resides in the apical cell membrane. The protein localises to the cytoplasmic vesicle. Its subcellular location is the phagosome membrane. It localises to the cell membrane. It catalyses the reaction a dipeptide(out) + 2 H(+)(out) = a dipeptide(in) + 2 H(+)(in). The enzyme catalyses glycyl-L-leucine(out) + 2 H(+)(out) = glycyl-L-leucine(in) + 2 H(+)(in). It carries out the reaction glycyl-L-lysine(out) + 2 H(+)(out) = glycyl-L-lysine(in) + 2 H(+)(in). The catalysed reaction is glycyl-L-glutamate(out) + 3 H(+)(out) = glycyl-L-glutamate(in) + 3 H(+)(in). It catalyses the reaction L-alanyl-L-alanine(out) + 2 H(+)(out) = L-alanyl-L-alanine(in) + 2 H(+)(in). The enzyme catalyses an L-amino acid tripeptide(out) + 2 H(+)(out) = an L-amino acid tripeptide(in) + 2 H(+)(in). It carries out the reaction N-acetyl-D-muramoyl-L-alanyl-D-isoglutamine(out) + 3 H(+)(out) = N-acetyl-D-muramoyl-L-alanyl-D-isoglutamine(in) + 3 H(+)(in). The catalysed reaction is carnosine(out) + 2 H(+)(out) = carnosine(in) + 2 H(+)(in). Proton-coupled amino-acid transporter that transports oligopeptides of 2 to 4 amino acids with a preference for dipeptides. Transports neutral and anionic dipeptides with a proton to peptide stoichiometry of 2:1 or 3:1. In kidney, involved in the absorption of circulating di- and tripeptides from the glomerular filtrate. Can also transport beta-lactam antibiotics, such as the aminocephalosporin cefadroxil, and other antiviral and anticancer drugs. Transports the dipeptide-like aminopeptidase inhibitor bestatin. Also able to transport carnosine. Involved in innate immunity by promoting the detection of microbial pathogens by NOD-like receptors (NLRs). Mediates transport of bacterial peptidoglycans across the plasma membrane or, in macrophages, the phagosome membrane: catalyzes the transport of certain bacterial peptidoglycans, such as muramyl dipeptide (MDP), the NOD2 ligand. This chain is Solute carrier family 15 member 2, found in Rattus norvegicus (Rat).